Here is a 334-residue protein sequence, read N- to C-terminus: Retinol dehydrogenase 13 (334 aa).

Position 2 is an N-acetylserine (Ser2). 45-51 (GANTGIG) contacts NADP(+). Substrate is bound at residue Ser174. Tyr200 functions as the Proton acceptor in the catalytic mechanism.

The protein belongs to the short-chain dehydrogenases/reductases (SDR) family.

The protein resides in the mitochondrion inner membrane. It carries out the reaction all-trans-retinol + NADP(+) = all-trans-retinal + NADPH + H(+). It participates in cofactor metabolism; retinol metabolism. Its function is as follows. Retinol dehydrogenase with a clear preference for NADP. Oxidizes all-trans-retinol, but seems to reduce all-trans-retinal with much higher efficiency. Has no activity towards steroid. This Mus musculus (Mouse) protein is Retinol dehydrogenase 13 (Rdh13).